Reading from the N-terminus, the 242-residue chain is Protein LST7 (242 aa).

Residues 48–212 (SCLLQFPEES…NKSKFGRNLV (165 aa)) form the uDENN FLCN/SMCR8-type domain.

Required for the nitrogen-regulated transport of amino acid permeases GAP1 and PUT4 from the Golgi to the cell surface. The protein is Protein LST7 (LST7) of Saccharomyces cerevisiae (strain ATCC 204508 / S288c) (Baker's yeast).